The sequence spans 1823 residues: THO complex subunit 2 (1823 aa).

A coiled-coil region spans residues 935 to 1003 (NRYESEISKQ…RRRLSREKDT (69 aa)). A Nuclear localization signal motif is present at residues 964–969 (KRKKEK). 2 disordered regions span residues 1244-1382 (LVGV…KDLN) and 1394-1823 (ALSS…GSRE). Basic and acidic residues-rich tracts occupy residues 1272–1283 (QMLKTKPLDGRT), 1312–1330 (KSMEQKETDETPRISDENP), and 1356–1367 (AKQDFGKDDGKS). Residues 1394–1409 (ALSSTAANGSIATGSS) show a composition bias toward polar residues. Over residues 1432–1596 (PRHEIVTSVR…EKSHPDDHFH (165 aa)) the composition is skewed to basic and acidic residues. The segment covering 1600-1610 (LPPPPPLPPNI) has biased composition (pro residues). Composition is skewed to basic and acidic residues over residues 1616–1625 (AAKEDLERRA), 1636–1648 (PRHEEREKRRSEE), 1655–1706 (DDAK…FEAS), and 1768–1785 (LGKEASSKMARRDPDPIA). 2 positions are modified to phosphoserine: S1646 and S1696. A compositionally biased stretch (polar residues) spans 1802–1816 (MTVNGKTTRGEQSGS).

It belongs to the THOC2 family. In terms of assembly, component of the THO complex, which is composed of THO1, THO2, THO3, THO5, THO6 and THO7.

Its subcellular location is the nucleus. Its function is as follows. Acts as a component of the THO subcomplex of the TREX complex which is thought to couple mRNA transcription, processing and nuclear export. This chain is THO complex subunit 2 (THO2), found in Arabidopsis thaliana (Mouse-ear cress).